Reading from the N-terminus, the 426-residue chain is Cephalotocin receptor 2 (426 aa).

The Extracellular portion of the chain corresponds to 1 to 51 (MYQAMEVESTSPSGFFLDFYTQSTIPTTDFLNNTNSSHPIRDEKLVKIEIA). 2 N-linked (GlcNAc...) asparagine glycosylation sites follow: Asn32 and Asn35. The chain crosses the membrane as a helical span at residues 52–72 (VLGTCFTLAIINNLCVLLVLL). Over 73-84 (WRRKKVRRMQMF) the chain is Cytoplasmic. Residues 85 to 105 (ILHLSIADLIVAFFNILPQLI) form a helical membrane-spanning segment. The Extracellular portion of the chain corresponds to 106 to 120 (WDITFRFMAGDAMCR). Residues Cys119 and Cys198 are joined by a disulfide bond. Residues 121 to 141 (FIKYAQMFSLYLSTYILIMTA) traverse the membrane as a helical segment. Residues 142–165 (VDRYRAICHPLSNQTWTPCMVYCK) are Cytoplasmic-facing. Residues 166 to 186 (IFIAYAIATIFSIPQAILFQM) form a helical membrane-spanning segment. Residues 187–208 (QEVNEGSGIYDCWVHFEPAWVL) lie on the Extracellular side of the membrane. Residues 209-229 (TAYALYIFFALYLIPILILFF) form a helical membrane-spanning segment. Residues 230 to 288 (TYGSICYTIWAKYRHAIKTKKDANTRYPQRRKKKGVILRTHSVHGFSKAKLNSVKLTFA) are Cytoplasmic-facing. The chain crosses the membrane as a helical span at residues 289–309 (VIVTYIICWSPFFVSQIWWLF). Topologically, residues 310-319 (DETVVGNAGV) are extracellular. The chain crosses the membrane as a helical span at residues 320–340 (VVILLMACLNSCTNPWIYLIF). At 341–426 (NRNYISNVLP…DQFIYSDKTT (86 aa)) the chain is on the cytoplasmic side. The interval 373-426 (GSVRRDSRKTSDPKRISESRRISDARRISGKTQKNNSSSPRKTSDQFIYSDKTT) is disordered. Residues 375–399 (VRRDSRKTSDPKRISESRRISDARR) show a composition bias toward basic and acidic residues. A compositionally biased stretch (polar residues) spans 402–426 (GKTQKNNSSSPRKTSDQFIYSDKTT).

This sequence belongs to the G-protein coupled receptor 1 family. Vasopressin/oxytocin receptor subfamily. Present in various peripheral tissues with highest expression in branchia and vas deferens. Very low expression detected in nervous system.

The protein resides in the cell membrane. Its function is as follows. Acts as a receptor for cephalotocin. The protein is Cephalotocin receptor 2 of Octopus vulgaris (Common octopus).